The primary structure comprises 519 residues: MSVSVLSPSRRLGGVSGILQVTSLLILLLLLIKAAQLYLHRQWLLKALQQFPCPPSHWLFGHIQEFQHDQELQRIQERVKTFPSACPYWIWGGKVRVQLYDPDYMKVILGRSDPKSHGSYKFLAPRIGYGLLLLNGQTWFQHRRMLTPAFHNDILKPYVGLMADSVRVMLDKWEELLGQDSPLEVFQHVSLMTLDTIMKSAFSHQGSIQVDRNSQSYIQAISDLNSLVFCCMRNAFHENDTIYSLTSAGRWTHRACQLAHQHTDQVIQLRKAQLQKEGELEKIKRKRHLDFLDILLLAKMENGSILSDKDLRAEVDTFMFEGHDTTASGISWILYALATHPKHQERCREEIHGLLGDGASITWNHLDQMPYTTMCIKEALRLYPPVPGIGRELSTPVTFPDGRSLPKGIMVLLSIYGLHHNPKVWPNLEVFDPSRFAPGSAQHSHAFLPFSGGSRNCIGKQFAMNQLKVARALTLLRFELLPDPTRIPIPMARLVLKSKNGIHLRLRRLPNPCEDKDQL.

A propeptide spanning residues 1-4 (MSVS) is cleaved from the precursor. Glu-321 provides a ligand contact to heme. Position 440 is a phosphoserine (Ser-440). Cys-457 provides a ligand contact to heme.

Belongs to the cytochrome P450 family.

It is found in the endoplasmic reticulum membrane. The protein localises to the microsome membrane. It catalyses the reaction an omega-methyl-long-chain fatty acid + reduced [NADPH--hemoprotein reductase] + O2 = an omega-hydroxy-long-chain fatty acid + oxidized [NADPH--hemoprotein reductase] + H2O + H(+). Its function is as follows. Catalyzes the omega- and (omega-1)-hydroxylation of various fatty acids such as laurate and palmitate. Shows no activity towards arachidonic acid and prostaglandin A1. Lacks functional activity in the kidney and does not contribute to renal 20-hydroxyeicosatetraenoic acid (20-HETE) biosynthesis. This is Cytochrome P450 4A22 (CYP4A22) from Homo sapiens (Human).